Consider the following 601-residue polypeptide: Potassium-transporting ATPase potassium-binding subunit (601 aa).

12 helical membrane passes run 3 to 23 (ASAW…AWPL), 62 to 82 (HYAL…YALQ), 132 to 152 (LGLS…AFAL), 179 to 199 (AWVL…QGVI), 283 to 303 (LTNL…CFAF), 314 to 334 (VAIL…VTAA), 367 to 387 (FGIS…CGAV), 397 to 417 (LGGM…GGAG), 419 to 439 (GLYG…LMIG), 459 to 479 (VAIL…VLAP), 523 to 543 (VLLA…VLAI), and 564 to 584 (GPLF…LNYV).

Belongs to the KdpA family. The system is composed of three essential subunits: KdpA, KdpB and KdpC.

It localises to the cell inner membrane. Functionally, part of the high-affinity ATP-driven potassium transport (or Kdp) system, which catalyzes the hydrolysis of ATP coupled with the electrogenic transport of potassium into the cytoplasm. This subunit binds the periplasmic potassium ions and delivers the ions to the membrane domain of KdpB through an intramembrane tunnel. The polypeptide is Potassium-transporting ATPase potassium-binding subunit (Paracidovorax citrulli (strain AAC00-1) (Acidovorax citrulli)).